Reading from the N-terminus, the 305-residue chain is MPSQSDLDRQIEHLMDCKPLPEEVRTLCDQARTILVEEWNVQPVKCPVTVCGDIHGQFHDLLELFRIGGSAPDTNYLFMGDYVDRGYYSVETVTLLVALKVRYRDRITILRGNHESRQITQVYGFFDECLRKYGNANVWKHFTDLFDYLPLTALIESQIFCLHGGLSPSLDTLDNIRALDRIQEVPHEGPMCDLLWSDPDDRCGWGISPRGAGYTFGQDIAAQFNHTNGLSLISRAHQLVMEGYNWSQENNVVTIFSAPNYCYRCGNMAAILEVGENMDQNFLQFDPAPRQVEPDVARRTPDYFL.

Positions 53, 55, 81, and 113 each coordinate Mn(2+). His114 acts as the Proton donor in catalysis. Mn(2+) contacts are provided by His163 and His237.

The protein belongs to the PPP phosphatase family. PP-2A subfamily. Mn(2+) serves as cofactor.

The catalysed reaction is O-phospho-L-seryl-[protein] + H2O = L-seryl-[protein] + phosphate. It catalyses the reaction O-phospho-L-threonyl-[protein] + H2O = L-threonyl-[protein] + phosphate. The sequence is that of Serine/threonine-protein phosphatase PP2A catalytic subunit from Helianthus annuus (Common sunflower).